The primary structure comprises 836 residues: RNA-binding protein 12B-A (836 aa).

The 76-residue stretch at 154–229 folds into the RRM 1 domain; it reads PYLFLRGLPY…RFIEVMQGSE (76 aa). The disordered stretch occupies residues 237 to 277; it reads GTATEGGDTPRMRSEEHSPSRRINGRHFRKRSHSKSPRARS. A compositionally biased stretch (basic and acidic residues) spans 244–255; that stretch reads DTPRMRSEEHSP. Residues 259–277 show a composition bias toward basic residues; the sequence is INGRHFRKRSHSKSPRARS. RRM domains are found at residues 283–359 and 401–478; these read FYVH…PVSR and LCIY…LISE. 2 disordered regions span residues 539–572 and 620–644; these read GHFK…PWEE and SQEH…RRSR. Residues 550 to 572 show a composition bias toward basic and acidic residues; it reads QSDRRSPEDFRHSPEDYRHPWEE. Serine 703 is modified (phosphoserine). An N6-acetyllysine modification is found at lysine 758. In terms of domain architecture, RRM 4 spans 760-836; that stretch reads IPVKISNLPF…GPRKVKLSLL (77 aa).

The protein is RNA-binding protein 12B-A (Rbm12b1) of Mus musculus (Mouse).